Consider the following 102-residue polypeptide: Putative pterin-4-alpha-carbinolamine dehydratase (102 aa).

Belongs to the pterin-4-alpha-carbinolamine dehydratase family.

The enzyme catalyses (4aS,6R)-4a-hydroxy-L-erythro-5,6,7,8-tetrahydrobiopterin = (6R)-L-erythro-6,7-dihydrobiopterin + H2O. The protein is Putative pterin-4-alpha-carbinolamine dehydratase of Burkholderia lata (strain ATCC 17760 / DSM 23089 / LMG 22485 / NCIMB 9086 / R18194 / 383).